The chain runs to 61 residues: Small ribosomal subunit protein uS14C (61 aa).

Zn(2+)-binding residues include C24, C27, C40, and C43.

The protein belongs to the universal ribosomal protein uS14 family. Zinc-binding uS14 subfamily. Part of the 30S ribosomal subunit. Contacts proteins S3 and S10. Zn(2+) is required as a cofactor.

Its function is as follows. Binds 16S rRNA, required for the assembly of 30S particles and may also be responsible for determining the conformation of the 16S rRNA at the A site. The chain is Small ribosomal subunit protein uS14C from Enterococcus faecalis (strain ATCC 700802 / V583).